The primary structure comprises 239 residues: Ribonuclease 3 (239 aa).

The 126-residue stretch at 12–137 (REKVEAVIGY…LIAAIYLDAG (126 aa)) folds into the RNase III domain. A Mg(2+)-binding site is contributed by glutamate 50. Residue aspartate 54 is part of the active site. The Mg(2+) site is built by aspartate 123 and glutamate 126. The active site involves glutamate 126. Residues 162–231 (DAKTELQEWA…ATRLLEREGV (70 aa)) form the DRBM domain.

This sequence belongs to the ribonuclease III family. As to quaternary structure, homodimer. The cofactor is Mg(2+).

It localises to the cytoplasm. The enzyme catalyses Endonucleolytic cleavage to 5'-phosphomonoester.. Its function is as follows. Digests double-stranded RNA. Involved in the processing of primary rRNA transcript to yield the immediate precursors to the large and small rRNAs (23S and 16S). Processes some mRNAs, and tRNAs when they are encoded in the rRNA operon. Processes pre-crRNA and tracrRNA of type II CRISPR loci if present in the organism. This Allorhizobium ampelinum (strain ATCC BAA-846 / DSM 112012 / S4) (Agrobacterium vitis (strain S4)) protein is Ribonuclease 3.